The sequence spans 983 residues: UPF0182 protein MLBr00644 (983 aa).

7 helical membrane passes run L19–A39, V63–V83, L113–Y133, F175–I195, L210–D230, K259–L279, and I287–V307.

The protein belongs to the UPF0182 family.

The protein localises to the cell membrane. This Mycobacterium leprae (strain Br4923) protein is UPF0182 protein MLBr00644.